Consider the following 301-residue polypeptide: UDP-N-acetylenolpyruvoylglucosamine reductase (301 aa).

The 165-residue stretch at 30-194 (VGGEPDYLVF…LSAKFALAPG (165 aa)) folds into the FAD-binding PCMH-type domain. Residue R173 is part of the active site. Residue S223 is the Proton donor of the active site. E293 is an active-site residue.

The protein belongs to the MurB family. FAD is required as a cofactor.

The protein localises to the cytoplasm. It carries out the reaction UDP-N-acetyl-alpha-D-muramate + NADP(+) = UDP-N-acetyl-3-O-(1-carboxyvinyl)-alpha-D-glucosamine + NADPH + H(+). Its pathway is cell wall biogenesis; peptidoglycan biosynthesis. Functionally, cell wall formation. The chain is UDP-N-acetylenolpyruvoylglucosamine reductase from Streptococcus pneumoniae (strain CGSP14).